A 359-amino-acid polypeptide reads, in one-letter code: DNA polymerase IV (359 aa).

Residues Ile7 to Gly188 form the UmuC domain. The Mg(2+) site is built by Asp11 and Asp106. Residue Glu107 is part of the active site.

Belongs to the DNA polymerase type-Y family. Monomer. The cofactor is Mg(2+).

Its subcellular location is the cytoplasm. It carries out the reaction DNA(n) + a 2'-deoxyribonucleoside 5'-triphosphate = DNA(n+1) + diphosphate. Functionally, poorly processive, error-prone DNA polymerase involved in untargeted mutagenesis. Copies undamaged DNA at stalled replication forks, which arise in vivo from mismatched or misaligned primer ends. These misaligned primers can be extended by PolIV. Exhibits no 3'-5' exonuclease (proofreading) activity. May be involved in translesional synthesis, in conjunction with the beta clamp from PolIII. This Clostridium perfringens (strain SM101 / Type A) protein is DNA polymerase IV.